Here is a 98-residue protein sequence, read N- to C-terminus: Cell division protein FtsB (98 aa).

Topologically, residues 1–3 (MKR) are cytoplasmic. A helical transmembrane segment spans residues 4–21 (LLIVLIALLAMLEYRLWF). The Periplasmic segment spans residues 22 to 98 (GDKSLAESFH…GGERDKPSND (77 aa)). The stretch at 31 to 74 (HLQEQIKLQQQSNAQLVARNQILREEISDLRSGTEALEERARNE) forms a coiled coil.

It belongs to the FtsB family. In terms of assembly, part of a complex composed of FtsB, FtsL and FtsQ.

It localises to the cell inner membrane. Functionally, essential cell division protein. May link together the upstream cell division proteins, which are predominantly cytoplasmic, with the downstream cell division proteins, which are predominantly periplasmic. In Shewanella halifaxensis (strain HAW-EB4), this protein is Cell division protein FtsB.